The following is a 294-amino-acid chain: Cytidine deaminase (294 aa).

CMP/dCMP-type deaminase domains lie at 48 to 168 (DEDA…FGPK) and 186 to 294 (LTGD…VLLA). 89-91 (NME) contacts substrate. Histidine 102 contributes to the Zn(2+) binding site. Glutamate 104 (proton donor) is an active-site residue. Zn(2+) is bound by residues cysteine 129 and cysteine 132.

Belongs to the cytidine and deoxycytidylate deaminase family. Homodimer. Requires Zn(2+) as cofactor.

The enzyme catalyses cytidine + H2O + H(+) = uridine + NH4(+). It carries out the reaction 2'-deoxycytidine + H2O + H(+) = 2'-deoxyuridine + NH4(+). This enzyme scavenges exogenous and endogenous cytidine and 2'-deoxycytidine for UMP synthesis. The sequence is that of Cytidine deaminase from Escherichia coli O7:K1 (strain IAI39 / ExPEC).